Consider the following 594-residue polypeptide: Cytoplasmic polyadenylation element-binding protein 1 (594 aa).

The interval 1 to 33 (MQHQVKACGDSKSTTRSLQGNRRSGAASLKKPS) is disordered. Positions 11–22 (SKSTTRSLQGNR) are enriched in polar residues. RRM domains lie at 257-364 (RKVF…PWRL) and 381-452 (RTVF…HAET). The segment at 519–560 (TGDQTRILPRPPHHQSSHYSPRSHQMMNHDSMESSNQSRGNT) is disordered. Residues 535-560 (SHYSPRSHQMMNHDSMESSNQSRGNT) are compositionally biased toward polar residues.

Interacts with fbf-1.

Functionally, cytoplasmic polyadenylation element binding protein that binds to and regulates the translation of specific mRNAs. Essential for progression through meiosis. Involved in spermatogenesis. This chain is Cytoplasmic polyadenylation element-binding protein 1 (cpb-1), found in Caenorhabditis remanei (Caenorhabditis vulgaris).